Consider the following 253-residue polypeptide: Aminoglycoside nucleotidyltransferase (4') (253 aa).

The interval 1–127 (MNGPIIMTRE…KVYQTAKSVE (127 aa)) is N-terminal domain. The ATP site is built by Ser-39, Arg-42, Ser-49, Asp-50, and Glu-52. Asp-50 and Glu-52 together coordinate Mg(2+). Positions 52 and 67 each coordinate neomycin B. Residues Glu-67, Lys-74, Glu-76, Glu-141, and Glu-145 each coordinate kanamycin A. The interval 128-241 (AQTFHDAICA…NGIQEWTERH (114 aa)) is C-terminal domain. 3 residues coordinate ATP: Glu-145, Lys-149, and Thr-187. Glu-145 is a binding site for Mg(2+). Catalysis depends on Glu-145, which acts as the Proton acceptor.

As to quaternary structure, homodimer. The cofactor is Mg(2+).

The catalysed reaction is amikacin + ATP = 4'-adenylylamikacin + diphosphate. The enzyme catalyses kanamycin A + ATP = 4'-adenylylkanamycin A + diphosphate. It carries out the reaction neomycin B + ATP = 4'-adenylylneomycin B + diphosphate. It catalyses the reaction paromomycin + ATP = 4'-adenylylparomomycin + diphosphate. The catalysed reaction is ribostamycin + ATP = 4'-adenylylribostamycin + diphosphate. The enzyme catalyses tobramycin + ATP = 4'-adenylyltobramycin + diphosphate. It carries out the reaction kanamycin A + CTP = 4'-cytidylylkanamycin A + diphosphate. It catalyses the reaction kanamycin A + GTP = 4'-guanylylkanamycin A + diphosphate. The catalysed reaction is kanamycin A + ITP = 4'-inosinylylkanamycin A + diphosphate. The enzyme catalyses dTTP + kanamycin A = 4'-thymidylylkanamycin A + diphosphate. It carries out the reaction kanamycin A + UTP = 4'-uridylylkanamycin A + diphosphate. It catalyses the reaction kanamycin A + dATP = 4'-(2'-deoxyadenylyl)kanamycin A + diphosphate. The catalysed reaction is kanamycin A + dCTP = 4'-(2'-deoxycytidylyl)kanamycin A + diphosphate. The enzyme catalyses kanamycin A + dGTP = 4'-(2'-deoxyguanylyl)kanamycin A + diphosphate. It carries out the reaction dUTP + kanamycin A = 4'-(2'-deoxyuridylyl)kanamycin A + diphosphate. It catalyses the reaction amikacin + GTP = 4'-guanylylamikacin + diphosphate. The catalysed reaction is amikacin + ITP = 4'-inosinylylamikacin + diphosphate. The enzyme catalyses amikacin + CTP = 4'-cytidylylamikacin + diphosphate. It carries out the reaction amikacin + UTP = 4'-uridylylamikacin + diphosphate. It catalyses the reaction amikacin + dTTP = 4'-thymidylylamikacin + diphosphate. Inactivates aminoglycoside antibiotics such as kanamycin by catalyzing the transfer of a nucleotidyl group from a wide variety of nucleoside triphosphates ((d)ATP, (d)CTP, (d)GTP, ITP, TTP and (d)UTP) to the 4'-hydroxyl group of the aminoglycoside. In vitro, antibiotics without the 4'-hydroxyl but possessing a 4''-hydroxyl group (e.g. sisomicin and gentamicin) are also modifed but with poor specificity. The 3' position of the NTP ribose ring does not tolerate large substitutions (e.g. ddATP) and dNTPs and TTP are better substrates than their NTP counterparts. A short (2.35 Angstrom) hydrogen bond initially facilitates tight binding of the substrate (between Glu-52 and antibiotic) that is subsequently disrupted by the assembly of the active ternary complex. This enables the release of products post-catalysis, a 'catch and release' mechanism. In Staphylococcus aureus, this protein is Aminoglycoside nucleotidyltransferase (4') (knt).